Reading from the N-terminus, the 621-residue chain is tRNA uridine 5-carboxymethylaminomethyl modification enzyme MnmG (621 aa).

G8–G13 contacts FAD. G269 to F283 provides a ligand contact to NAD(+).

Belongs to the MnmG family. As to quaternary structure, homodimer. Heterotetramer of two MnmE and two MnmG subunits. It depends on FAD as a cofactor.

The protein resides in the cytoplasm. Its function is as follows. NAD-binding protein involved in the addition of a carboxymethylaminomethyl (cmnm) group at the wobble position (U34) of certain tRNAs, forming tRNA-cmnm(5)s(2)U34. The protein is tRNA uridine 5-carboxymethylaminomethyl modification enzyme MnmG of Chlorobium phaeovibrioides (strain DSM 265 / 1930) (Prosthecochloris vibrioformis (strain DSM 265)).